Reading from the N-terminus, the 148-residue chain is Probable glucosamine 6-phosphate N-acetyltransferase (148 aa).

The N-acetyltransferase domain occupies 3 to 148 (ISINELNFDD…KQMALYLNGK (146 aa)). Substrate-binding positions include Thr-25, 72 to 75 (KFIH), and 84 to 86 (EDV). Acetyl-CoA contacts are provided by residues 86 to 88 (VVV) and 94 to 99 (LHGIGK). Substrate-binding positions include 115-116 (YK) and Asp-120. Acetyl-CoA is bound at residue 129–131 (YCK). Substrate is bound at residue Glu-138.

It belongs to the acetyltransferase family. GNA1 subfamily.

The enzyme catalyses D-glucosamine 6-phosphate + acetyl-CoA = N-acetyl-D-glucosamine 6-phosphate + CoA + H(+). It functions in the pathway nucleotide-sugar biosynthesis; UDP-N-acetyl-alpha-D-glucosamine biosynthesis; N-acetyl-alpha-D-glucosamine 1-phosphate from alpha-D-glucosamine 6-phosphate (route I): step 1/2. This chain is Probable glucosamine 6-phosphate N-acetyltransferase, found in Acanthamoeba polyphaga (Amoeba).